Consider the following 105-residue polypeptide: Large ribosomal subunit protein uL24 (105 aa).

It belongs to the universal ribosomal protein uL24 family. As to quaternary structure, part of the 50S ribosomal subunit.

One of two assembly initiator proteins, it binds directly to the 5'-end of the 23S rRNA, where it nucleates assembly of the 50S subunit. Its function is as follows. One of the proteins that surrounds the polypeptide exit tunnel on the outside of the subunit. This is Large ribosomal subunit protein uL24 from Mycolicibacterium vanbaalenii (strain DSM 7251 / JCM 13017 / BCRC 16820 / KCTC 9966 / NRRL B-24157 / PYR-1) (Mycobacterium vanbaalenii).